The sequence spans 869 residues: Bifunctional uridylyltransferase/uridylyl-removing enzyme (869 aa).

A uridylyltransferase region spans residues 1–331 (MPTNLPALPM…FPSESQVTRV (331 aa)). The tract at residues 332 to 688 (INERFVERQG…ARISPAGEGL (357 aa)) is uridylyl-removing. One can recognise an HD domain in the interval 450-572 (VDQHILMVVR…VGDERHLTAL (123 aa)). ACT domains are found at residues 689-773 (QVAV…PSQG) and 800-869 (LLSL…ALEI).

The protein belongs to the GlnD family. Mg(2+) is required as a cofactor.

The catalysed reaction is [protein-PII]-L-tyrosine + UTP = [protein-PII]-uridylyl-L-tyrosine + diphosphate. It carries out the reaction [protein-PII]-uridylyl-L-tyrosine + H2O = [protein-PII]-L-tyrosine + UMP + H(+). Uridylyltransferase (UTase) activity is inhibited by glutamine, while glutamine activates uridylyl-removing (UR) activity. Modifies, by uridylylation and deuridylylation, the PII regulatory proteins (GlnB and homologs), in response to the nitrogen status of the cell that GlnD senses through the glutamine level. Under low glutamine levels, catalyzes the conversion of the PII proteins and UTP to PII-UMP and PPi, while under higher glutamine levels, GlnD hydrolyzes PII-UMP to PII and UMP (deuridylylation). Thus, controls uridylylation state and activity of the PII proteins, and plays an important role in the regulation of nitrogen assimilation and metabolism. The sequence is that of Bifunctional uridylyltransferase/uridylyl-removing enzyme from Cupriavidus pinatubonensis (strain JMP 134 / LMG 1197) (Cupriavidus necator (strain JMP 134)).